The sequence spans 588 residues: Sulfite reductase [NADPH] hemoprotein beta-component (588 aa).

The [4Fe-4S] cluster site is built by C442, C448, C487, and C491. C491 is a siroheme binding site.

Belongs to the nitrite and sulfite reductase 4Fe-4S domain family. Alpha(8)-beta(8). The alpha component is a flavoprotein, the beta component is a hemoprotein. Siroheme is required as a cofactor. The cofactor is [4Fe-4S] cluster.

It catalyses the reaction hydrogen sulfide + 3 NADP(+) + 3 H2O = sulfite + 3 NADPH + 4 H(+). It functions in the pathway sulfur metabolism; hydrogen sulfide biosynthesis; hydrogen sulfide from sulfite (NADPH route): step 1/1. Its function is as follows. Component of the sulfite reductase complex that catalyzes the 6-electron reduction of sulfite to sulfide. This is one of several activities required for the biosynthesis of L-cysteine from sulfate. The protein is Sulfite reductase [NADPH] hemoprotein beta-component of Actinobacillus pleuropneumoniae serotype 3 (strain JL03).